The chain runs to 374 residues: 2-oxoglutarate-Fe(II) type oxidoreductase ppzC (374 aa).

The interval 111-130 (KDGPFDSGYRGPGTQRVNPT) is disordered. The Fe2OG dioxygenase domain maps to 220 to 330 (YPDASLEINF…RVSMPFFWGF (111 aa)). Residues histidine 254, aspartate 256, and histidine 311 each contribute to the Fe cation site. Arginine 321 serves as a coordination point for 2-oxoglutarate.

It belongs to the iron/ascorbate-dependent oxidoreductase family. Fe(2+) serves as cofactor.

It catalyses the reaction peramine + 2-oxoglutarate + O2 = 8-hydroxyperamine + succinate + CO2. It functions in the pathway secondary metabolite biosynthesis. 2-oxoglutarate-Fe(II) type oxidoreductase; part of the gene cluster that mediates the biosynthesis of pyrrolopyrazines, secondary metabolites showing insecticidal activity. Within the pathway, ppzC uses peramine as substrate for hydroxylation to yield the novel analog 8-hydroxyperamine. The single multifunctional NRPS ppzA is sufficient to produce peramine via condensation of 1-pyrroline-5-carboxylate and arginine, N-methylation of the alpha-amino group of arginine and reduction of the thioester and the cyclization to form an iminium ion resulting in release from the peptide synthetase. Deprotonation of this intermediate and oxidation of the pyrroline ring would give rise to peramine. In Epichloe species that produce only peramine, the peramine synthetase gene is not localized in a gene cluster, in contrast to Metarhizium species that contain additional pyrrolopyrazine biosynthesis genes. The 2-oxoglutarate-Fe(II) type oxidoreductase ppzC hydroxylates peramine to yield the newly identified compound 8-hydroxyperamine whereas ppzD converts L-proline into trans-4-hydroxy-L-proline, a precursor of peramine biosynthesis. The polypeptide is 2-oxoglutarate-Fe(II) type oxidoreductase ppzC (Metarhizium rileyi (strain RCEF 4871) (Nomuraea rileyi)).